Reading from the N-terminus, the 833-residue chain is Leucine--tRNA ligase (833 aa).

The short motif at 41-52 (PYPSGAGLHVGH) is the 'HIGH' region element. Residues 610–614 (KMSKS) carry the 'KMSKS' region motif. Position 613 (Lys-613) interacts with ATP.

It belongs to the class-I aminoacyl-tRNA synthetase family.

It is found in the cytoplasm. The catalysed reaction is tRNA(Leu) + L-leucine + ATP = L-leucyl-tRNA(Leu) + AMP + diphosphate. The chain is Leucine--tRNA ligase from Streptococcus pneumoniae (strain 70585).